A 244-amino-acid chain; its full sequence is Eukaryotic translation initiation factor 6 (244 aa).

Belongs to the eIF-6 family. In terms of assembly, monomer. Associates with the 60S ribosomal subunit.

The protein resides in the cytoplasm. The protein localises to the nucleus. It is found in the nucleolus. Functionally, binds to the 60S ribosomal subunit and prevents its association with the 40S ribosomal subunit to form the 80S initiation complex in the cytoplasm. May also be involved in ribosome biogenesis. The protein is Eukaryotic translation initiation factor 6 (eif6) of Dictyostelium discoideum (Social amoeba).